The chain runs to 85 residues: UPF0386 protein VF_0869 (85 aa).

This sequence belongs to the UPF0386 family.

The protein is UPF0386 protein VF_0869 of Aliivibrio fischeri (strain ATCC 700601 / ES114) (Vibrio fischeri).